We begin with the raw amino-acid sequence, 193 residues long: Interleukin-18 (193 aa).

Positions 1-36 are excised as a propeptide; that stretch reads MAAEPVEDNCINFVAMKFIDNTLYFIAEDDENLESD.

Belongs to the IL-1 family. Forms a ternary complex with ligand-binding receptor subunit IL18R1 and signaling receptor subunit IL18RAP at the plasma membrane. Mature IL18 first binds to IL18R1 forming a low affinity binary complex, which then interacts with IL18RAP to form a high affinity ternary complex that signals inside the cell. Interacts with cargo receptor TMED10; the interaction mediates the translocation from the cytoplasm into the ERGIC (endoplasmic reticulum-Golgi intermediate compartment) and thereby secretion. The pro-IL-18 precursor is processed by CASP1, CASP4 or CASP5 to yield its mature, active form. The pro-IL-18 precursor features autoinhibitory interactions between the propeptide and the post-cleavage-site region, preventing recognition by the IL18R1 receptor. Processing by CASP1, CASP4 or CASP5 induces conformational changes to generate critical receptor-binding sites. The mature form is then secreted and released in the extracellular milieu by passing through the gasdermin-D (GSDMD) pore. In contrast, cleavage by CASP3 inactivates IL18. As to expression, expressed in ovarian carcinoma but undetectable in normal ovarian epithelial cells. Resistant to proteolytic activation by caspase-1 and -4.

It is found in the cytoplasm. Its subcellular location is the cytosol. The protein resides in the secreted. Functionally, pro-inflammatory cytokine primarily involved in epithelial barrier repair, polarized T-helper 1 (Th1) cell and natural killer (NK) cell immune responses. Upon binding to IL18R1 and IL18RAP, forms a signaling ternary complex which activates NF-kappa-B, triggering synthesis of inflammatory mediators. Synergizes with IL12/interleukin-12 to induce IFNG synthesis from T-helper 1 (Th1) cells and natural killer (NK) cells. Involved in transduction of inflammation downstream of pyroptosis: its mature form is specifically released in the extracellular milieu by passing through the gasdermin-D (GSDMD) pore. This chain is Interleukin-18, found in Homo sapiens (Human).